We begin with the raw amino-acid sequence, 204 residues long: Phosphoribosyl-dephospho-CoA transferase (204 aa).

Residues D129 and D131 contribute to the active site.

Belongs to the MdcG family.

The catalysed reaction is apo-[malonate decarboxylase ACP] + 2'-(5''-triphospho-alpha-D-ribosyl)-3'-dephospho-CoA = holo-[malonate decarboxylase ACP] + diphosphate. Transfers 2'-(5-triphosphoribosyl)-3'-dephosphocoenzyme-A to the apo-[acyl-carrier-protein] of the malonate decarboxylase to yield holo-[acyl-carrier-protein]. This Pseudomonas putida (strain W619) protein is Phosphoribosyl-dephospho-CoA transferase.